Here is a 142-residue protein sequence, read N- to C-terminus: Lysosomal enzyme trafficking factor (142 aa).

A run of 2 helical transmembrane segments spans residues 8–28 and 76–96; these read MGWI…YYIF and LLPF…VFLF.

The protein belongs to the LYSET family.

Its subcellular location is the golgi apparatus membrane. In terms of biological role, required for mannose-6-phosphate-dependent trafficking of lysosomal enzymes. LYSET bridges GlcNAc-1-phosphate transferase (GNPTAB), to the membrane-bound transcription factor site-1 protease (MBTPS1), thus allowing proteolytic activation of the GNPTAB. GNPTAB is involved in the regulation of M6P-dependent Golgi-to-lysosome trafficking of lysosomal enzymes. LYSET is thus an essential factor for maturation and delivery of lysosomal hydrolases. The sequence is that of Lysosomal enzyme trafficking factor (tmem251) from Danio rerio (Zebrafish).